The sequence spans 275 residues: NH(3)-dependent NAD(+) synthetase (275 aa).

ATP is bound at residue 43 to 50 (GISGGVDS). Asp-49 lines the Mg(2+) pocket. Arg-145 contributes to the deamido-NAD(+) binding site. An ATP-binding site is contributed by Thr-165. Position 170 (Glu-170) interacts with Mg(2+). Positions 178 and 185 each coordinate deamido-NAD(+). Lys-194 and Thr-216 together coordinate ATP. 265 to 266 (HK) serves as a coordination point for deamido-NAD(+).

This sequence belongs to the NAD synthetase family. In terms of assembly, homodimer.

The catalysed reaction is deamido-NAD(+) + NH4(+) + ATP = AMP + diphosphate + NAD(+) + H(+). It participates in cofactor biosynthesis; NAD(+) biosynthesis; NAD(+) from deamido-NAD(+) (ammonia route): step 1/1. In terms of biological role, catalyzes the ATP-dependent amidation of deamido-NAD to form NAD. Uses ammonia as a nitrogen source. This is NH(3)-dependent NAD(+) synthetase from Shewanella denitrificans (strain OS217 / ATCC BAA-1090 / DSM 15013).